The chain runs to 309 residues: Uricase-2 isozyme 2 (309 aa).

Catalysis depends on charge relay system residues Lys-18 and Thr-64. Urate contacts are provided by Thr-64, Asp-65, Phe-166, Arg-183, Val-238, Gln-239, and Asn-265. His-267 (charge relay system) is an active-site residue.

This sequence belongs to the uricase family. In terms of assembly, homotetramer.

It is found in the peroxisome. It catalyses the reaction urate + O2 + H2O = 5-hydroxyisourate + H2O2. It functions in the pathway purine metabolism; urate degradation; (S)-allantoin from urate: step 1/3. Catalyzes the oxidation of uric acid to 5-hydroxyisourate, which is further processed to form (S)-allantoin. This is Uricase-2 isozyme 2 from Glycine max (Soybean).